Consider the following 466-residue polypeptide: Sushi repeat-containing protein SRPX2 (466 aa).

A signal peptide spans 1 to 24; it reads MKTGSLTQRGALLLLLLLAPAVTP. Sushi domains lie at 70–120, 121–179, and 263–322; these read ATCY…YCRQ, MRCH…VCVD, and RRCP…VCTP. 4 disulfides stabilise this stretch: Cys72–Cys106, Cys92–Cys118, Cys123–Cys164, and Cys150–Cys177. The HYR domain occupies 178 to 262; sequence VDIDPPKIRC…SCKFIVKVQV (85 aa). 2 cysteine pairs are disulfide-bonded: Cys265–Cys307 and Cys293–Cys320.

In terms of assembly, forms homooligomers. Interacts with PLAUR (via the UPAR/Ly6 domains), ADAMTS4 and CTSB. Interacts with HGF; the interaction increases the mitogenic activity of HGF. In terms of processing, contains chondroitin sulfate chains.

It is found in the secreted. The protein localises to the cytoplasm. It localises to the cell surface. Its subcellular location is the synapse. Its function is as follows. Acts as a ligand for the urokinase plasminogen activator surface receptor. Plays a role in angiogenesis by inducing endothelial cell migration and the formation of vascular network (cords). Involved in cellular migration and adhesion. Increases the phosphorylation levels of FAK. Interacts with and increases the mitogenic activity of HGF. Promotes synapse formation. The chain is Sushi repeat-containing protein SRPX2 from Rattus norvegicus (Rat).